Here is a 357-residue protein sequence, read N- to C-terminus: Hsp70-binding protein 1 (357 aa).

The tract at residues M1–E68 is disordered. Residues S23 to G35 are compositionally biased toward gly residues. ARM repeat units follow at residues E130–Q172, A175–R215, E218–V257, and P260–T299. 2 positions are modified to phosphoserine: S349 and S354.

As to quaternary structure, interacts with the ATP-binding domain of HSPA1A. Detected in a ternary complex containing STUB1, HSPA1A and HSPBP1. Interacts with PGLYRP1; this interaction blocks the cytotoxic activity of the PGLYRP1-HSPA1A complex.

Inhibits HSPA1A chaperone activity by changing the conformation of the ATP-binding domain of HSPA1A and interfering with ATP binding. Interferes with ubiquitination mediated by STUB1 and inhibits chaperone-assisted degradation of target proteins. In Mus musculus (Mouse), this protein is Hsp70-binding protein 1 (Hspbp1).